The following is a 273-amino-acid chain: Putative phosphoenolpyruvate synthase regulatory protein (273 aa).

153-160 (GVSRSGKT) lines the ADP pocket.

The protein belongs to the pyruvate, phosphate/water dikinase regulatory protein family. PSRP subfamily.

The catalysed reaction is [pyruvate, water dikinase] + ADP = [pyruvate, water dikinase]-phosphate + AMP + H(+). It carries out the reaction [pyruvate, water dikinase]-phosphate + phosphate + H(+) = [pyruvate, water dikinase] + diphosphate. Functionally, bifunctional serine/threonine kinase and phosphorylase involved in the regulation of the phosphoenolpyruvate synthase (PEPS) by catalyzing its phosphorylation/dephosphorylation. The polypeptide is Putative phosphoenolpyruvate synthase regulatory protein (Leptothrix cholodnii (strain ATCC 51168 / LMG 8142 / SP-6) (Leptothrix discophora (strain SP-6))).